The following is a 289-amino-acid chain: Inorganic pyrophosphatase (289 aa).

Residue Ser2 is modified to N-acetylserine. The residue at position 57 (Lys57) is an N6-acetyllysine. Mg(2+) contacts are provided by Asp116, Asp121, and Asp153. Position 228 is an N6-acetyllysine (Lys228). At Ser250 the chain carries Phosphoserine.

This sequence belongs to the PPase family. As to quaternary structure, homodimer. The cofactor is Mg(2+).

Its subcellular location is the cytoplasm. The enzyme catalyses diphosphate + H2O = 2 phosphate + H(+). This chain is Inorganic pyrophosphatase (Ppa1), found in Mus musculus (Mouse).